We begin with the raw amino-acid sequence, 485 residues long: Glutamyl-tRNA(Gln) amidotransferase subunit A (485 aa).

Residues K79 and S154 each act as charge relay system in the active site. Catalysis depends on S178, which acts as the Acyl-ester intermediate.

This sequence belongs to the amidase family. GatA subfamily. As to quaternary structure, heterotrimer of A, B and C subunits.

The enzyme catalyses L-glutamyl-tRNA(Gln) + L-glutamine + ATP + H2O = L-glutaminyl-tRNA(Gln) + L-glutamate + ADP + phosphate + H(+). In terms of biological role, allows the formation of correctly charged Gln-tRNA(Gln) through the transamidation of misacylated Glu-tRNA(Gln) in organisms which lack glutaminyl-tRNA synthetase. The reaction takes place in the presence of glutamine and ATP through an activated gamma-phospho-Glu-tRNA(Gln). In Clostridium botulinum (strain Langeland / NCTC 10281 / Type F), this protein is Glutamyl-tRNA(Gln) amidotransferase subunit A.